The primary structure comprises 203 residues: Peptidyl-tRNA hydrolase (203 aa).

Tyr14 is a tRNA binding site. The active-site Proton acceptor is His19. Residues Tyr64, Asn66, and Asn112 each coordinate tRNA.

This sequence belongs to the PTH family. As to quaternary structure, monomer.

It localises to the cytoplasm. It catalyses the reaction an N-acyl-L-alpha-aminoacyl-tRNA + H2O = an N-acyl-L-amino acid + a tRNA + H(+). Its function is as follows. Hydrolyzes ribosome-free peptidyl-tRNAs (with 1 or more amino acids incorporated), which drop off the ribosome during protein synthesis, or as a result of ribosome stalling. Functionally, catalyzes the release of premature peptidyl moieties from peptidyl-tRNA molecules trapped in stalled 50S ribosomal subunits, and thus maintains levels of free tRNAs and 50S ribosomes. In Methylobacterium sp. (strain 4-46), this protein is Peptidyl-tRNA hydrolase.